Here is a 382-residue protein sequence, read N- to C-terminus: Acetyltransferase eriL (382 aa).

6 helical membrane-spanning segments follow: residues 5 to 25 (LQPL…LGAV), 33 to 53 (ALLF…TTTG), 59 to 79 (IVTW…LLIN), 146 to 166 (TLFY…SPVF), 192 to 212 (LWSY…ALGV), and 335 to 355 (GYMW…DPQF).

The protein belongs to the wax synthase family.

Its subcellular location is the membrane. The catalysed reaction is cyathatriol + acetyl-CoA = 11-O-acetylcyathatriol + CoA. It catalyses the reaction cyathin A3 + acetyl-CoA = 11-O-acetylcyathin A3 + CoA. Its pathway is secondary metabolite biosynthesis. Functionally, acetyltransferase; part of the gene cluster that mediates the biosynthesis of erinacines, cyathane-xylosides that show unique biological activities, including leishmanicidal activity, stimulating activity for nerve growth-factor synthesis, and agonistic activity toward the kappa opioid receptor. Within the pathway, eriL converts cyathatriol into 11-O-acetyl-cyathatriol. EriL is also able to acetylate cyathin A3 to produce 11-O-acetylcyathin A3. The first step of the erinacines biosynthesis pathway is catalyzed by the geranylgeranyl diphosphate (GGPP) synthase eriE via conversion of farnesyl pyrophosphate and isopentyl pyrophosphate into geranylgeranyl pyrophosphate (GGPP). GGPP is then substrate of the diterpene cyclase eriG for the production of cyatha-3,12-diene. The cytochrome P450 monooxygenase eriI then hydroxylates cyatha-3,12-diene at C-14 of the seven-membered ring to produce erinacol, which is further hydroxylated at C-15 by the cytochrome P450 monooxygenase eriC to yield cyathadiol. The cytochrome P450 monooxygenase eriA then catalyzes C-11 hydroxylation in the presence of the short chain dehydrogenase/reductase (SDR) eriH, which leads to the production of cyathatriol. The acetyltransferase eriL converts cyathatriol into 11-O-acetyl-cyathatriol. The SDR eriH catalyzes further oxidation of 11-O-acetyl-cyathatriol into 1-O-acetylcyathin A3. Finally, the glycosyl transferase eriJ tranfers xylose from UDP-xylose onto C-14 of 11-O-acetyl-cyathatriol to form eracine Q. EriJ is also able to convert 11-O-acetyl-cyathatriol to eracine Q2 by using UDP-D-glucose as cosubstrate, but at a lower rate. This Hericium erinaceus (Lion's mane mushroom) protein is Acetyltransferase eriL.